Consider the following 248-residue polypeptide: tRNA (guanine-N(1)-)-methyltransferase (248 aa).

S-adenosyl-L-methionine-binding positions include Gly-113 and 133–138 (VGDYVL).

It belongs to the RNA methyltransferase TrmD family. Homodimer.

The protein resides in the cytoplasm. The catalysed reaction is guanosine(37) in tRNA + S-adenosyl-L-methionine = N(1)-methylguanosine(37) in tRNA + S-adenosyl-L-homocysteine + H(+). Functionally, specifically methylates guanosine-37 in various tRNAs. This Shewanella sp. (strain W3-18-1) protein is tRNA (guanine-N(1)-)-methyltransferase.